Here is a 325-residue protein sequence, read N- to C-terminus: Urease accessory protein UreD (325 aa).

This sequence belongs to the UreD family. As to quaternary structure, ureD, UreF and UreG form a complex that acts as a GTP-hydrolysis-dependent molecular chaperone, activating the urease apoprotein by helping to assemble the nickel containing metallocenter of UreC. The UreE protein probably delivers the nickel.

It is found in the cytoplasm. In terms of biological role, required for maturation of urease via the functional incorporation of the urease nickel metallocenter. Functionally, expression of the urease operon increases the likelihood of bacterial survival by contributing to acid resistance in vitro and in vivo in BALB/c mice. Y.enterocolitica enters the body via an oral path and must survive the acidic stomach before being able to colonize the intestinal mucosa. This chain is Urease accessory protein UreD, found in Yersinia enterocolitica.